A 318-amino-acid chain; its full sequence is Phospho-N-acetylmuramoyl-pentapeptide-transferase (318 aa).

10 helical membrane passes run 5–25, 50–70, 71–91, 115–135, 139–159, 173–193, 198–218, 222–242, 248–268, and 298–318; these read LKPLVLAAVVTLILGPPVLAF, PTMGGVLFLIGLTVSTLVLAP, PSPLTLSTLILTWGYALIGLV, VLLGLVAGVAAMLWLGRGSVI, VTGWHWDLGWYYPLLAALLLV, GLAAGITLWVALAYGILALTL, LVTFAMALAGGCLGFLVYNFH, VFMGDTGSLALGAAIGFLAIM, VLPVLGGVYVLETLSVILQVV, and VLFFWALAIIMALAGLYLLTI.

This sequence belongs to the glycosyltransferase 4 family. MraY subfamily. Mg(2+) serves as cofactor.

Its subcellular location is the cell membrane. The enzyme catalyses UDP-N-acetyl-alpha-D-muramoyl-L-alanyl-gamma-D-glutamyl-meso-2,6-diaminopimeloyl-D-alanyl-D-alanine + di-trans,octa-cis-undecaprenyl phosphate = di-trans,octa-cis-undecaprenyl diphospho-N-acetyl-alpha-D-muramoyl-L-alanyl-D-glutamyl-meso-2,6-diaminopimeloyl-D-alanyl-D-alanine + UMP. Its pathway is cell wall biogenesis; peptidoglycan biosynthesis. Catalyzes the initial step of the lipid cycle reactions in the biosynthesis of the cell wall peptidoglycan: transfers peptidoglycan precursor phospho-MurNAc-pentapeptide from UDP-MurNAc-pentapeptide onto the lipid carrier undecaprenyl phosphate, yielding undecaprenyl-pyrophosphoryl-MurNAc-pentapeptide, known as lipid I. The sequence is that of Phospho-N-acetylmuramoyl-pentapeptide-transferase from Moorella thermoacetica (strain ATCC 39073 / JCM 9320).